The primary structure comprises 460 residues: Serine--tRNA ligase (460 aa).

242-244 (TAE) contacts L-serine. Residues 273 to 275 (RRE) and valine 289 contribute to the ATP site. Glutamate 296 lines the L-serine pocket. 369–372 (EVSS) contributes to the ATP binding site. L-serine is bound at residue serine 405.

It belongs to the class-II aminoacyl-tRNA synthetase family. Type-1 seryl-tRNA synthetase subfamily. In terms of assembly, homodimer. The tRNA molecule binds across the dimer.

It is found in the cytoplasm. It catalyses the reaction tRNA(Ser) + L-serine + ATP = L-seryl-tRNA(Ser) + AMP + diphosphate + H(+). It carries out the reaction tRNA(Sec) + L-serine + ATP = L-seryl-tRNA(Sec) + AMP + diphosphate + H(+). The protein operates within aminoacyl-tRNA biosynthesis; selenocysteinyl-tRNA(Sec) biosynthesis; L-seryl-tRNA(Sec) from L-serine and tRNA(Sec): step 1/1. Catalyzes the attachment of serine to tRNA(Ser). Is also able to aminoacylate tRNA(Sec) with serine, to form the misacylated tRNA L-seryl-tRNA(Sec), which will be further converted into selenocysteinyl-tRNA(Sec). This is Serine--tRNA ligase from Haloquadratum walsbyi (strain DSM 16790 / HBSQ001).